A 141-amino-acid polypeptide reads, in one-letter code: Ribosome maturation factor RimP (141 aa).

This sequence belongs to the RimP family.

The protein resides in the cytoplasm. Required for maturation of 30S ribosomal subunits. This chain is Ribosome maturation factor RimP, found in Laribacter hongkongensis (strain HLHK9).